The chain runs to 135 residues: MYNKLPISYSRKHTQFQSSIISEILVWIEGNLTNRLSLDDIAQHSGYTKWHLQRVFRKIVGMPLGEYIRRRRICEAAKELQTTNLQVIDIALKYQFDSQQSFAKRFKAYLGISPSLYRLSDTGYNDLLLLEPKVA.

One can recognise an HTH araC/xylS-type domain in the interval 22–120 (SEILVWIEGN…GISPSLYRLS (99 aa)). DNA-binding regions (H-T-H motif) lie at residues 39–60 (DDIAQHSGYTKWHLQRVFRKIV) and 87–110 (VIDIALKYQFDSQQSFAKRFKAYL).

Transcriptional activator of 2'-N-acetyltransferase. This is HTH-type transcriptional activator AarP (aarP) from Providencia stuartii.